The primary structure comprises 285 residues: Phycobilisome 31.6 kDa linker polypeptide, phycocyanin-associated, rod (285 aa).

The region spanning 1-180 (MPITTAASRL…LYRGYATSDR (180 aa)) is the PBS-linker domain.

The protein belongs to the phycobilisome linker protein family.

The protein localises to the cellular thylakoid membrane. In terms of biological role, rod linker protein, associated with phycocyanin. Linker polypeptides determine the state of aggregation and the location of the disk-shaped phycobiliprotein units within the phycobilisome and modulate their spectroscopic properties in order to mediate a directed and optimal energy transfer. This Microchaete diplosiphon (Fremyella diplosiphon) protein is Phycobilisome 31.6 kDa linker polypeptide, phycocyanin-associated, rod (cpcI3).